The sequence spans 388 residues: Beta-hexosaminidase LpqI (388 aa).

The first 19 residues, 1–19, serve as a signal peptide directing secretion; sequence MAFPRTLAILAAAAALVVA. Cys20 carries N-palmitoyl cysteine lipidation. Residue Cys20 is the site of S-diacylglycerol cysteine attachment. Substrate is bound by residues Asp123, Arg131, Arg193, and 223–224; that span reads KH. The active-site Proton donor/acceptor is His236. The active-site Nucleophile is Asp311.

The protein belongs to the glycosyl hydrolase 3 family.

It localises to the cell inner membrane. The catalysed reaction is Hydrolysis of terminal non-reducing N-acetyl-D-hexosamine residues in N-acetyl-beta-D-hexosaminides.. The protein operates within cell wall biogenesis; peptidoglycan recycling. In terms of biological role, plays a role in peptidoglycan recycling by cleaving the terminal beta-1,4-linked N-acetylglucosamine (GlcNAc) from peptidoglycan fragments. Acts as a regulator for GlcNAc-MurNAc levels by cleaving disaccharides and allowing the breakdown of MurNAc. The sequence is that of Beta-hexosaminidase LpqI from Mycobacterium tuberculosis (strain ATCC 25618 / H37Rv).